A 348-amino-acid polypeptide reads, in one-letter code: Eukaryotic translation initiation factor 3 subunit I (348 aa).

6 WD repeats span residues 8–49 (GHER…GTFE), 51–91 (HMGT…YTYE), 93–135 (PTPV…PKNQ), 147–186 (DGAKKVTIAGWSAGGKYIIAGHEDGLVSKYDGATGEFIDS), 196–238 (EKIH…KVYK), and 294–333 (GHFGPLNTIAVHPDGTGYASGGEDGFIRLHSFDKSYYDFE).

This sequence belongs to the eIF-3 subunit I family. As to quaternary structure, component of the eukaryotic translation initiation factor 3 (eIF-3) complex.

Its subcellular location is the cytoplasm. Component of the eukaryotic translation initiation factor 3 (eIF-3) complex, which is involved in protein synthesis of a specialized repertoire of mRNAs and, together with other initiation factors, stimulates binding of mRNA and methionyl-tRNAi to the 40S ribosome. The eIF-3 complex specifically targets and initiates translation of a subset of mRNAs involved in cell proliferation. This Meyerozyma guilliermondii (strain ATCC 6260 / CBS 566 / DSM 6381 / JCM 1539 / NBRC 10279 / NRRL Y-324) (Yeast) protein is Eukaryotic translation initiation factor 3 subunit I.